Consider the following 55-residue polypeptide: MFGWAITFLVIAIAAGIFGFAGLAGTAAWIAKVLFVVGLAAVLIMLVMGRRPPTV.

Transmembrane regions (helical) follow at residues 1 to 21 (MFGW…FGFA) and 28 to 48 (AWIA…MLVM).

The protein belongs to the UPF0391 family.

It localises to the cell membrane. The chain is UPF0391 membrane protein Tbd_2772 from Thiobacillus denitrificans (strain ATCC 25259 / T1).